The primary structure comprises 273 residues: Medium-wave-sensitive opsin 1 (273 aa).

The Extracellular portion of the chain corresponds to 1-5 (APRWV). A helical membrane pass occupies residues 6-30 (YHLTSAWMVFVVIASVFTNGLVLAA). The Cytoplasmic segment spans residues 31-42 (TMRFKKLRHPLN). The helical transmembrane segment at 43–68 (WILVNLAIADLVETIIASTISVVNQM) threads the bilayer. The Extracellular segment spans residues 69–82 (YGYFVLGHPLCVVE). C79 and C156 are joined by a disulfide. Residues 83-102 (GYTASLCGITGLWSLAIISW) form a helical membrane-spanning segment. Over 103 to 121 (ERWMVVCRPFGNVRFDAKL) the chain is Cytoplasmic. A helical membrane pass occupies residues 122 to 145 (AIAGIAFSWIWAAVWTAPPIFGWS). Topologically, residues 146–171 (RYWPHGLKTSCGPDVFSGSSYPGVQS) are extracellular. A helical transmembrane segment spans residues 172–199 (YMIVLMITCCFIPLSVIVLCYLQVWLAI). Residues 200-221 (RAVAKQQKESESTQKAEKEVTR) lie on the Cytoplasmic side of the membrane. Residues 222-245 (MVMVMIFAFCLCWGPYAFFACFAA) traverse the membrane as a helical segment. Over 246-253 (AHPGYAFH) the chain is Extracellular. The helical transmembrane segment at 254–273 (PLVAALPAYFAKSATIYNPI) threads the bilayer. The residue at position 265 (K265) is an N6-(retinylidene)lysine.

This sequence belongs to the G-protein coupled receptor 1 family. Opsin subfamily. In terms of assembly, monomer. Homodimer. Homotetramer. Post-translationally, O-glycosylated. Phosphorylated on some or all of the serine and threonine residues present in the C-terminal region. As to expression, the three color pigments are found in the cone photoreceptor cells.

Its subcellular location is the membrane. Visual pigments are the light-absorbing molecules that mediate vision. They consist of an apoprotein, opsin, covalently linked to cis-retinal. The sequence is that of Medium-wave-sensitive opsin 1 (OPN1MW) from Odocoileus virginianus virginianus (Virginia white-tailed deer).